Reading from the N-terminus, the 538-residue chain is Cytochrome P450 52A4 (538 aa).

A helical membrane pass occupies residues 27–46 (WYILIPTILLTLNFLSILHT). C485 serves as a coordination point for heme.

It belongs to the cytochrome P450 family. Heme serves as cofactor.

It localises to the membrane. Its function is as follows. Together with an NADPH cytochrome P450 the enzyme system catalyzes the terminal hydroxylation as the first step in the assimilation of alkanes and fatty acids. In Candida maltosa (Yeast), this protein is Cytochrome P450 52A4 (CYP52A4).